A 236-amino-acid chain; its full sequence is 2-C-methyl-D-erythritol 4-phosphate cytidylyltransferase (236 aa).

It belongs to the IspD/TarI cytidylyltransferase family. IspD subfamily. In terms of assembly, homodimer.

The catalysed reaction is 2-C-methyl-D-erythritol 4-phosphate + CTP + H(+) = 4-CDP-2-C-methyl-D-erythritol + diphosphate. Its pathway is isoprenoid biosynthesis; isopentenyl diphosphate biosynthesis via DXP pathway; isopentenyl diphosphate from 1-deoxy-D-xylulose 5-phosphate: step 2/6. Its function is as follows. Catalyzes the formation of 4-diphosphocytidyl-2-C-methyl-D-erythritol from CTP and 2-C-methyl-D-erythritol 4-phosphate (MEP). This chain is 2-C-methyl-D-erythritol 4-phosphate cytidylyltransferase, found in Salmonella agona (strain SL483).